Here is a 150-residue protein sequence, read N- to C-terminus: Avidin-related protein 3 (150 aa).

Residues 1-24 form the signal peptide; sequence MVHTTSPLLLLLLLSLALVAPSLS. The 122-residue stretch at 26 to 147 folds into the Avidin-like domain; it reads RKCSLTGKWT…GYNNFTRQRT (122 aa). A disulfide bond links cysteine 28 and cysteine 105. Positions 36, 40, 57, 59, and 63 each coordinate biotin. A glycan (N-linked (GlcNAc...) asparagine) is linked at asparagine 93. Residues serine 95, serine 99, and asparagine 140 each contribute to the biotin site. N-linked (GlcNAc...) asparagine glycosylation is present at asparagine 141.

It belongs to the avidin/streptavidin family. In terms of assembly, homotetramer. Glycosylated.

The protein localises to the secreted. Its function is as follows. Forms a strong non-covalent specific complex with biotin. The chain is Avidin-related protein 3 (AVR3) from Gallus gallus (Chicken).